Consider the following 535-residue polypeptide: CTP synthase (535 aa).

The interval 1-267 (MTKYIFVTGG…DQIVCDHLKL (267 aa)) is amidoligase domain. CTP is bound at residue serine 13. Position 13 (serine 13) interacts with UTP. An ATP-binding site is contributed by 14–19 (SLGKGI). An L-glutamine-binding site is contributed by tyrosine 54. Aspartate 71 lines the ATP pocket. Aspartate 71 and glutamate 141 together coordinate Mg(2+). CTP is bound by residues 148–150 (DIE), 188–193 (KTKPTQ), and lysine 224. UTP is bound by residues 188–193 (KTKPTQ) and lysine 224. Position 240-242 (240-242 (RDA)) interacts with ATP. The Glutamine amidotransferase type-1 domain occupies 292–534 (KIALVGKYVE…VKASITNKES (243 aa)). Residue glycine 354 coordinates L-glutamine. Catalysis depends on cysteine 381, which acts as the Nucleophile; for glutamine hydrolysis. L-glutamine contacts are provided by residues 382–385 (LGMQ), glutamate 405, and arginine 462. Active-site residues include histidine 507 and glutamate 509.

This sequence belongs to the CTP synthase family. In terms of assembly, homotetramer.

The enzyme catalyses UTP + L-glutamine + ATP + H2O = CTP + L-glutamate + ADP + phosphate + 2 H(+). It carries out the reaction L-glutamine + H2O = L-glutamate + NH4(+). It catalyses the reaction UTP + NH4(+) + ATP = CTP + ADP + phosphate + 2 H(+). The protein operates within pyrimidine metabolism; CTP biosynthesis via de novo pathway; CTP from UDP: step 2/2. With respect to regulation, allosterically activated by GTP, when glutamine is the substrate; GTP has no effect on the reaction when ammonia is the substrate. The allosteric effector GTP functions by stabilizing the protein conformation that binds the tetrahedral intermediate(s) formed during glutamine hydrolysis. Inhibited by the product CTP, via allosteric rather than competitive inhibition. In terms of biological role, catalyzes the ATP-dependent amination of UTP to CTP with either L-glutamine or ammonia as the source of nitrogen. Regulates intracellular CTP levels through interactions with the four ribonucleotide triphosphates. In Bacillus thuringiensis subsp. konkukian (strain 97-27), this protein is CTP synthase.